Reading from the N-terminus, the 370-residue chain is Protein STRICTOSIDINE SYNTHASE-LIKE 4 (370 aa).

An N-terminal signal peptide occupies residues 1 to 21 (MVLFFSTRFLFFSIFFPCLIS). The N-linked (GlcNAc...) asparagine glycan is linked to N101. Y303 is modified (phosphotyrosine).

The protein belongs to the strictosidine synthase family.

It is found in the vacuole. In Arabidopsis thaliana (Mouse-ear cress), this protein is Protein STRICTOSIDINE SYNTHASE-LIKE 4.